Reading from the N-terminus, the 363-residue chain is Isopentenyl-diphosphate delta-isomerase (363 aa).

15-16 (RK) contributes to the substrate binding site. Residues Ser-73, 74 to 76 (SMT), Ser-104, and Asn-133 contribute to the FMN site. 104–106 (SMR) serves as a coordination point for substrate. Position 168 (Gln-168) interacts with substrate. Glu-169 contacts Mg(2+). FMN contacts are provided by residues Lys-200, Thr-230, and 313–314 (AG).

It belongs to the IPP isomerase type 2 family. As to quaternary structure, homooctamer. Dimer of tetramers. FMN serves as cofactor. It depends on NADPH as a cofactor. Mg(2+) is required as a cofactor.

It localises to the cytoplasm. It catalyses the reaction isopentenyl diphosphate = dimethylallyl diphosphate. Its function is as follows. Involved in the biosynthesis of isoprenoids. Catalyzes the 1,3-allylic rearrangement of the homoallylic substrate isopentenyl (IPP) to its allylic isomer, dimethylallyl diphosphate (DMAPP). The chain is Isopentenyl-diphosphate delta-isomerase from Chlorobium phaeobacteroides (strain DSM 266 / SMG 266 / 2430).